A 118-amino-acid polypeptide reads, in one-letter code: Large ribosomal subunit protein bL20 (118 aa).

Belongs to the bacterial ribosomal protein bL20 family.

Its function is as follows. Binds directly to 23S ribosomal RNA and is necessary for the in vitro assembly process of the 50S ribosomal subunit. It is not involved in the protein synthesizing functions of that subunit. This chain is Large ribosomal subunit protein bL20, found in Protochlamydia amoebophila (strain UWE25).